A 204-amino-acid chain; its full sequence is Protein XpaC (204 aa).

In double copy it causes aberrant cell morphology, filamentation and inhibits sporulation. Hydrolyzes 5-bromo-4-chloroindolyl phosphate. The protein is Protein XpaC (xpaC) of Bacillus subtilis (strain 168).